A 370-amino-acid chain; its full sequence is tRNA-specific 2-thiouridylase MnmA (370 aa).

Residues 24-31 (AMSGGVDS) and Leu-50 each bind ATP. Cys-119 functions as the Nucleophile in the catalytic mechanism. Cysteines 119 and 215 form a disulfide. Residue Gly-143 coordinates ATP. The tract at residues 165–167 (KDQ) is interaction with tRNA. Cys-215 functions as the Cysteine persulfide intermediate in the catalytic mechanism.

Belongs to the MnmA/TRMU family.

The protein localises to the cytoplasm. The enzyme catalyses S-sulfanyl-L-cysteinyl-[protein] + uridine(34) in tRNA + AH2 + ATP = 2-thiouridine(34) in tRNA + L-cysteinyl-[protein] + A + AMP + diphosphate + H(+). Its function is as follows. Catalyzes the 2-thiolation of uridine at the wobble position (U34) of tRNA, leading to the formation of s(2)U34. In Wolbachia pipientis wMel, this protein is tRNA-specific 2-thiouridylase MnmA.